Reading from the N-terminus, the 157-residue chain is Transcriptional repressor NrdR (157 aa).

A zinc finger lies at 3-34 (CPFCGHEDTQVKDSRPTDDGTAIRRRRSCTAC). The ATP-cone domain maps to 49–139 (LIVVKTDQRR…VYRNFSDAGD (91 aa)).

This sequence belongs to the NrdR family. The cofactor is Zn(2+).

Its function is as follows. Negatively regulates transcription of bacterial ribonucleotide reductase nrd genes and operons by binding to NrdR-boxes. This is Transcriptional repressor NrdR from Granulibacter bethesdensis (strain ATCC BAA-1260 / CGDNIH1).